A 406-amino-acid polypeptide reads, in one-letter code: Arginine biosynthesis bifunctional protein ArgJ (406 aa).

Substrate is bound by residues threonine 152, lysine 179, threonine 190, glutamate 277, asparagine 401, and serine 406. The Nucleophile role is filled by threonine 190.

The protein belongs to the ArgJ family. Heterotetramer of two alpha and two beta chains.

It localises to the cytoplasm. The enzyme catalyses N(2)-acetyl-L-ornithine + L-glutamate = N-acetyl-L-glutamate + L-ornithine. The catalysed reaction is L-glutamate + acetyl-CoA = N-acetyl-L-glutamate + CoA + H(+). Its pathway is amino-acid biosynthesis; L-arginine biosynthesis; L-ornithine and N-acetyl-L-glutamate from L-glutamate and N(2)-acetyl-L-ornithine (cyclic): step 1/1. It participates in amino-acid biosynthesis; L-arginine biosynthesis; N(2)-acetyl-L-ornithine from L-glutamate: step 1/4. Catalyzes two activities which are involved in the cyclic version of arginine biosynthesis: the synthesis of N-acetylglutamate from glutamate and acetyl-CoA as the acetyl donor, and of ornithine by transacetylation between N(2)-acetylornithine and glutamate. The polypeptide is Arginine biosynthesis bifunctional protein ArgJ (Neisseria gonorrhoeae).